A 203-amino-acid chain; its full sequence is GTP cyclohydrolase-2 (203 aa).

49–53 (RIHSE) is a GTP binding site. Zn(2+) is bound by residues Cys54, Cys65, and Cys67. Residues Gln70, 92–94 (EGR), and Thr114 each bind GTP. Asp126 (proton acceptor) is an active-site residue. Arg128 serves as the catalytic Nucleophile. Positions 149 and 154 each coordinate GTP.

It belongs to the GTP cyclohydrolase II family. Zn(2+) serves as cofactor.

The catalysed reaction is GTP + 4 H2O = 2,5-diamino-6-hydroxy-4-(5-phosphoribosylamino)-pyrimidine + formate + 2 phosphate + 3 H(+). Its pathway is cofactor biosynthesis; riboflavin biosynthesis; 5-amino-6-(D-ribitylamino)uracil from GTP: step 1/4. Catalyzes the conversion of GTP to 2,5-diamino-6-ribosylamino-4(3H)-pyrimidinone 5'-phosphate (DARP), formate and pyrophosphate. This chain is GTP cyclohydrolase-2, found in Shewanella sp. (strain MR-7).